The sequence spans 777 residues: Zinc finger protein 786 (777 aa).

The region spanning 9–80 is the KRAB domain; it reads LTFEDVAIYF…WGEKKKPDKE (72 aa). The C2H2-type 1; degenerate zinc-finger motif lies at 194–216; sequence NSCPVCRENSWEKNHLVKQQKGH. A C2H2-type 2 zinc finger spans residues 240–262; that stretch reads ISCLGCGKSFRLKQYLVRHLDIH. The C2H2-type 3; degenerate zinc finger occupies 268–291; the sequence is PQCPKCKMCFHHERTLFSHHLKNS. Residues 420 to 442 form a C2H2-type 4; degenerate zinc finger; that stretch reads VFCRKCGQGFTKHCGLTEHTRIL. 11 C2H2-type zinc fingers span residues 448-470, 476-498, 504-526, 532-554, 560-582, 588-610, 616-638, 644-665, 671-693, 699-721, and 727-749; these read FWCAQCGRNFSQKGQLLRHQRLH, FQCTMCELRFHLKSRLRAHQLQH, FSCSECGRAFTHQCKLREHLRVH, FQCPECHKSFRLKGVLKAHQRIH, FSCGECGKGFIRQSKLTEHFRVH, FQCPECDRRFRLKGQLLSHQRLH, FQCPECGKSYRVKADMKAHQLLH, FSCQCGKGFAKQSKLVEHMRTH, FQCPKCDKSFRLKAQLLSHQGLH, FHCPECDKNFREKGHMLRHQRIH, and FACGDCGKGFIYKSKLAEHIRVH.

It belongs to the krueppel C2H2-type zinc-finger protein family.

The protein localises to the nucleus. In terms of biological role, may be involved in transcriptional regulation. The protein is Zinc finger protein 786 (Znf786) of Mus musculus (Mouse).